The primary structure comprises 976 residues: Ephrin type-A receptor 2 (976 aa).

The first 23 residues, 1–23 (MELWAARACFVLLWGCALAPATA), serve as a signal peptide directing secretion. The segment at 1–206 (MELWAARACF…YYKKCPELLQ (206 aa)) is mediates interaction with CLDN4. Over 25–537 (QGKEVVLLDF…SPEGSGSLAV (513 aa)) the chain is Extracellular. The Eph LBD domain occupies 28–206 (EVVLLDFAAA…YYKKCPELLQ (179 aa)). 2 disulfide bridges follow: cysteine 70–cysteine 188 and cysteine 105–cysteine 115. A Fibronectin type-III 1 domain is found at 328–432 (PPSAPHYLTA…TSRSFRTASV (105 aa)). 2 N-linked (GlcNAc...) asparagine glycosylation sites follow: asparagine 407 and asparagine 435. The Fibronectin type-III 2 domain occupies 438–529 (EPPKVRLEGR…KVHEFQTLSP (92 aa)). Residues 538–558 (IGGVAVCVVLLLLLAGAGFFI) traverse the membrane as a helical segment. Over 559-976 (HRRRKNLRAR…DQVNTVGIPI (418 aa)) the chain is Cytoplasmic. Serine 570 bears the Phosphoserine mark. The residue at position 575 (tyrosine 575) is a Phosphotyrosine. Residue serine 579 is modified to Phosphoserine. A Phosphotyrosine; by autocatalysis modification is found at tyrosine 588. Position 594 is a phosphotyrosine (tyrosine 594). Positions 606 to 906 (TEIHPSCVTR…STSGSEGVPF (301 aa)) are mediates interaction with ARHGEF16. Residues 613–875 (VTRQKVIGAG…DIVSILDKLI (263 aa)) enclose the Protein kinase domain. 619-627 (IGAGEFGEV) serves as a coordination point for ATP. The residue at position 628 (tyrosine 628) is a Phosphotyrosine. Lysine 646 lines the ATP pocket. At threonine 647 the chain carries Phosphothreonine. Tyrosine 735 is subject to Phosphotyrosine; by autocatalysis. Catalysis depends on aspartate 739, which acts as the Proton acceptor. A Phosphotyrosine modification is found at tyrosine 772. Phosphoserine occurs at positions 869, 892, 897, and 901. Residues 886–976 (DFDPRVSIRL…DQVNTVGIPI (91 aa)) form a negatively regulates interaction with ARHGEF16 region. Residues 904-968 (VPFRTVSEWL…AYSLLGLKDQ (65 aa)) enclose the SAM domain. A Phosphotyrosine; by autocatalysis modification is found at tyrosine 921. Residue tyrosine 930 is modified to Phosphotyrosine. A PDZ-binding motif is present at residues 974-976 (IPI).

This sequence belongs to the protein kinase superfamily. Tyr protein kinase family. Ephrin receptor subfamily. As to quaternary structure, homodimer. Interacts with SLA. Interacts (phosphorylated form) with VAV2, VAV3 and PI3-kinase p85 subunit (PIK3R1, PIK3R2 or PIK3R3); critical for the EFNA1-induced activation of RAC1 which stimulates cell migration. Interacts with INPPL1; regulates activated EPHA2 endocytosis and degradation. Interacts (inactivated form) with PTK2/FAK1 and interacts (EFNA1 ligand-activated form) with PTPN11; regulates integrin-mediated adhesion. Interacts with ARHGEF16, DOCK4 and ELMO2; mediates ligand-independent activation of RAC1 which stimulates cell migration. Interacts with CLDN4; phosphorylates CLDN4 and may regulate tight junctions. Interacts with ACP1. Interacts with ANKS1A. Interacts with CEMIP. Interacts with NCK1; may regulate EPHA2 activity in cell migration and adhesion. Interacts with TIMD4. In terms of processing, autophosphorylates. Phosphorylated on tyrosine upon binding and activation by EFNA1. Phosphorylated residues Tyr-588 and Tyr-594 are required for binding VAV2 and VAV3 while phosphorylated residues Tyr-735 and Tyr-930 are required for binding PI3-kinase p85 subunit (PIK3R1, PIK3R2 or PIK3R3). These phosphorylated residues are critical for recruitment of VAV2 and VAV3 and PI3-kinase p85 subunit which transduce downstream signaling to activate RAC1 GTPase and cell migration. Dephosphorylation of Tyr-930 by PTPRF prevents the interaction of EPHA2 with NCK1. Phosphorylated at Ser-897 by PKB; serum-induced phosphorylation which targets EPHA2 to the cell leading edge and stimulates cell migration. Phosphorylation by PKB is inhibited by EFNA1-activated EPHA2 which regulates PKB activity via a reciprocal regulatory loop. Phosphorylated at Ser-897 in response to TNF by RPS6KA1 and RPS6KA3; RPS6KA-EPHA2 signaling pathway controls cell migration. Phosphorylated at Ser-897 by PKA; blocks cell retraction induced by EPHA2 kinase activity. Dephosphorylated by ACP1. Post-translationally, ubiquitinated by CHIP/STUB1. Ubiquitination is regulated by the HSP90 chaperone and regulates the receptor stability and activity through proteasomal degradation. ANKS1A prevents ubiquitination and degradation.

It is found in the cell membrane. The protein resides in the cell projection. The protein localises to the ruffle membrane. Its subcellular location is the lamellipodium membrane. It localises to the cell junction. It is found in the focal adhesion. It carries out the reaction L-tyrosyl-[protein] + ATP = O-phospho-L-tyrosyl-[protein] + ADP + H(+). Functionally, receptor tyrosine kinase which binds promiscuously membrane-bound ephrin-A family ligands residing on adjacent cells, leading to contact-dependent bidirectional signaling into neighboring cells. The signaling pathway downstream of the receptor is referred to as forward signaling while the signaling pathway downstream of the ephrin ligand is referred to as reverse signaling. Activated by the ligand ephrin-A1/EFNA1 regulates migration, integrin-mediated adhesion, proliferation and differentiation of cells. Regulates cell adhesion and differentiation through DSG1/desmoglein-1 and inhibition of the ERK1/ERK2 signaling pathway. May also participate in UV radiation-induced apoptosis and have a ligand-independent stimulatory effect on chemotactic cell migration. During development, may function in distinctive aspects of pattern formation and subsequently in development of several fetal tissues. Involved for instance in angiogenesis, in early hindbrain development and epithelial proliferation and branching morphogenesis during mammary gland development. Engaged by the ligand ephrin-A5/EFNA5 may regulate lens fiber cells shape and interactions and be important for lens transparency development and maintenance. With ephrin-A2/EFNA2 may play a role in bone remodeling through regulation of osteoclastogenesis and osteoblastogenesis. The polypeptide is Ephrin type-A receptor 2 (EPHA2) (Macaca fascicularis (Crab-eating macaque)).